The sequence spans 385 residues: Chaperone protein DnaJ (385 aa).

One can recognise a J domain in the interval 5 to 70 (DYYEVLGVAK…QKRAAYDRYG (66 aa)). The segment at 145-223 (GFDTEIRVPS…CDGVGRTRRN (79 aa)) adopts a CR-type zinc-finger fold. The Zn(2+) site is built by Cys-158, Cys-161, Cys-175, Cys-178, Cys-197, Cys-200, Cys-211, and Cys-214. 4 CXXCXGXG motif repeats span residues 158–165 (CDTCHGSG), 175–182 (CRTCGGSG), 197–204 (CPTCHGTG), and 211–218 (CPSCDGVG).

Belongs to the DnaJ family. Homodimer. Requires Zn(2+) as cofactor.

It localises to the cytoplasm. In terms of biological role, participates actively in the response to hyperosmotic and heat shock by preventing the aggregation of stress-denatured proteins and by disaggregating proteins, also in an autonomous, DnaK-independent fashion. Unfolded proteins bind initially to DnaJ; upon interaction with the DnaJ-bound protein, DnaK hydrolyzes its bound ATP, resulting in the formation of a stable complex. GrpE releases ADP from DnaK; ATP binding to DnaK triggers the release of the substrate protein, thus completing the reaction cycle. Several rounds of ATP-dependent interactions between DnaJ, DnaK and GrpE are required for fully efficient folding. Also involved, together with DnaK and GrpE, in the DNA replication of plasmids through activation of initiation proteins. This is Chaperone protein DnaJ from Bordetella pertussis (strain Tohama I / ATCC BAA-589 / NCTC 13251).